A 337-amino-acid polypeptide reads, in one-letter code: Glyceraldehyde-3-phosphate dehydrogenase, cytosolic (337 aa).

Residues 13 to 14 (RI), Asp35, and Arg82 contribute to the NAD(+) site. Residues 153–155 (SCT), Thr184, 213–214 (TG), and Arg236 contribute to the D-glyceraldehyde 3-phosphate site. The active-site Nucleophile is the Cys154. Residue Asn318 coordinates NAD(+).

It belongs to the glyceraldehyde-3-phosphate dehydrogenase family. In terms of assembly, homotetramer.

It is found in the cytoplasm. It catalyses the reaction D-glyceraldehyde 3-phosphate + phosphate + NAD(+) = (2R)-3-phospho-glyceroyl phosphate + NADH + H(+). It functions in the pathway carbohydrate degradation; glycolysis; pyruvate from D-glyceraldehyde 3-phosphate: step 1/5. Its function is as follows. Key enzyme in glycolysis that catalyzes the first step of the pathway by converting D-glyceraldehyde 3-phosphate (G3P) into 3-phospho-D-glyceroyl phosphate. Essential for the maintenance of cellular ATP levels and carbohydrate metabolism. The sequence is that of Glyceraldehyde-3-phosphate dehydrogenase, cytosolic (GAPC) from Antirrhinum majus (Garden snapdragon).